The chain runs to 1079 residues: Adhesion G-protein coupled receptor F3 (1079 aa).

The N-terminal stretch at methionine 1 to alanine 25 is a signal peptide. Residues serine 26–glutamine 775 lie on the Extracellular side of the membrane. 6 N-linked (GlcNAc...) asparagine glycosylation sites follow: asparagine 188, asparagine 264, asparagine 301, asparagine 382, asparagine 441, and asparagine 648. Residues histidine 599–proline 765 enclose the GAIN-B domain. 2 disulfides stabilise this stretch: cysteine 715-cysteine 747 and cysteine 734-cysteine 749. Residues cysteine 715–proline 765 form a GPS region. The chain crosses the membrane as a helical span at residues valine 776–tryptophan 796. Residues arginine 797–alanine 811 are Cytoplasmic-facing. The chain crosses the membrane as a helical span at residues leucine 812–leucine 832. The Extracellular segment spans residues serine 833–leucine 851. Residues tyrosine 852–phenylalanine 874 form a helical membrane-spanning segment. Topologically, residues histidine 875 to arginine 881 are cytoplasmic. A helical membrane pass occupies residues valine 882–leucine 902. Topologically, residues glycine 903–threonine 928 are extracellular. Residues phenylalanine 929–leucine 949 traverse the membrane as a helical segment. The Cytoplasmic portion of the chain corresponds to lysine 950–lysine 973. Residues alanine 974 to leucine 994 traverse the membrane as a helical segment. Residues glutamate 995–histidine 1002 are Extracellular-facing. A helical membrane pass occupies residues tyrosine 1003–methionine 1023. Over aspartate 1024–serine 1079 the chain is Cytoplasmic.

Belongs to the G-protein coupled receptor 2 family. Adhesion G-protein coupled receptor (ADGR) subfamily. In terms of assembly, heterodimer of 2 chains generated by proteolytic processing; the large extracellular N-terminal fragment and the membrane-bound C-terminal fragment predominantly remain associated and non-covalently linked. Post-translationally, autoproteolytically processed at the GPS region of the GAIN-B domain; this cleavage modulates receptor activity.

It is found in the membrane. Orphan receptor. The polypeptide is Adhesion G-protein coupled receptor F3 (ADGRF3) (Homo sapiens (Human)).